We begin with the raw amino-acid sequence, 158 residues long: MTYHIDIQNATGKLLPLSEDEITKLASLALRDHKQDAELTVRLVDVEEMTYLNHTYRKKNKPTNVLAFPCSLPANIELECPLLGDVVICPEVLLAESAQFNKSLHAHWSLILIHGVLHLLGYDHIKDEEASIMQMLEAKLLAELGYANPYEVEENELE.

Zn(2+)-binding residues include His-114, His-118, and His-124.

This sequence belongs to the endoribonuclease YbeY family. Zn(2+) serves as cofactor.

Its subcellular location is the cytoplasm. Single strand-specific metallo-endoribonuclease involved in late-stage 70S ribosome quality control and in maturation of the 3' terminus of the 16S rRNA. This Legionella pneumophila (strain Paris) protein is Endoribonuclease YbeY.